A 410-amino-acid chain; its full sequence is Sprouty-related, EVH1 domain-containing protein 3 (410 aa).

The region spanning 1–113 is the WH1 domain; it reads MVRVRAVVMA…KSLLAALAAL (113 aa). Residues 117–210 form a disordered region; the sequence is SLTPSSSSSS…PEPSEPLAGA (94 aa). Composition is skewed to low complexity over residues 120–130 and 147–165; these read PSSSSSSSSPS and DSSS…AAAP. Positions 195 to 244 constitute a KBD domain; that stretch reads LPFTGIPEPSEPLAGAGGLGWGGRGYEDYRRSGPPAPLALSTCVVRFAKT. Residue arginine 240 is modified to Asymmetric dimethylarginine. Arginine 248 is subject to Omega-N-methylarginine. The disordered stretch occupies residues 258 to 288; sequence LPAPLTEAAPPAPPARPPPGPGPSSAPAKAS. Residues 267-281 are compositionally biased toward pro residues; the sequence is PPAPPARPPPGPGPS. One can recognise an SPR domain in the interval 296–407; the sequence is RCVHCRALFR…CAGCGGRHEE (112 aa).

Interacts with palmitoyltransferase ZDHHC17/HIP14; the interaction leads to palmitoylation of SPRED3. In terms of processing, phosphorylated on tyrosine. Palmitoylated by ZDHHC17/HIP14. Post-translationally, ubiquitinated.

It is found in the cell membrane. Functionally, tyrosine kinase substrate that inhibits growth-factor-mediated activation of MAP kinase. Inhibits fibroblast growth factor (FGF)-induced retinal lens fiber differentiation, probably by inhibiting FGF-mediated phosphorylation of ERK1/2. Inhibits TGFB-induced epithelial-to-mesenchymal transition in lens epithelial cells. The polypeptide is Sprouty-related, EVH1 domain-containing protein 3 (SPRED3) (Homo sapiens (Human)).